The primary structure comprises 1059 residues: Carbamoyl phosphate synthase large chain (1059 aa).

A carboxyphosphate synthetic domain region spans residues 1-401; sequence MPKRKDIQKI…SLLKACRSLE (401 aa). ATP is bound by residues arginine 129, arginine 169, glycine 175, glycine 176, arginine 208, isoleucine 210, glutamate 215, glycine 241, isoleucine 242, histidine 243, glutamine 284, and glutamate 298. Positions 133–327 constitute an ATP-grasp 1 domain; it reads KQLMEELGQP…IAKLAAKIAV (195 aa). Mg(2+) contacts are provided by glutamine 284, glutamate 298, and asparagine 300. Residues glutamine 284, glutamate 298, and asparagine 300 each contribute to the Mn(2+) site. An oligomerization domain region spans residues 402-546; it reads VGVDHNELPA…YSTYGFENES (145 aa). The interval 547–929 is carbamoyl phosphate synthetic domain; the sequence is VKSSKESVLV…ALYKAFEASY (383 aa). An ATP-grasp 2 domain is found at 671–861; sequence EQALKELDIP…MAQVATRLIL (191 aa). Residues arginine 707, serine 746, isoleucine 748, glutamate 752, glycine 777, valine 778, histidine 779, serine 780, glutamine 820, and glutamate 832 each coordinate ATP. Residues glutamine 820, glutamate 832, and asparagine 834 each coordinate Mg(2+). Residues glutamine 820, glutamate 832, and asparagine 834 each coordinate Mn(2+). Positions 930–1059 constitute an MGS-like domain; sequence LHLPNFGNVV…ESRSFTTEAI (130 aa). The interval 930–1059 is allosteric domain; that stretch reads LHLPNFGNVV…ESRSFTTEAI (130 aa).

This sequence belongs to the CarB family. In terms of assembly, composed of two chains; the small (or glutamine) chain promotes the hydrolysis of glutamine to ammonia, which is used by the large (or ammonia) chain to synthesize carbamoyl phosphate. Tetramer of heterodimers (alpha,beta)4. The cofactor is Mg(2+). Mn(2+) is required as a cofactor.

It carries out the reaction hydrogencarbonate + L-glutamine + 2 ATP + H2O = carbamoyl phosphate + L-glutamate + 2 ADP + phosphate + 2 H(+). The enzyme catalyses hydrogencarbonate + NH4(+) + 2 ATP = carbamoyl phosphate + 2 ADP + phosphate + 2 H(+). It functions in the pathway amino-acid biosynthesis; L-arginine biosynthesis; carbamoyl phosphate from bicarbonate: step 1/1. The protein operates within pyrimidine metabolism; UMP biosynthesis via de novo pathway; (S)-dihydroorotate from bicarbonate: step 1/3. Its function is as follows. Large subunit of the glutamine-dependent carbamoyl phosphate synthetase (CPSase). CPSase catalyzes the formation of carbamoyl phosphate from the ammonia moiety of glutamine, carbonate, and phosphate donated by ATP, constituting the first step of 2 biosynthetic pathways, one leading to arginine and/or urea and the other to pyrimidine nucleotides. The large subunit (synthetase) binds the substrates ammonia (free or transferred from glutamine from the small subunit), hydrogencarbonate and ATP and carries out an ATP-coupled ligase reaction, activating hydrogencarbonate by forming carboxy phosphate which reacts with ammonia to form carbamoyl phosphate. The protein is Carbamoyl phosphate synthase large chain of Streptococcus gordonii (strain Challis / ATCC 35105 / BCRC 15272 / CH1 / DL1 / V288).